The primary structure comprises 624 residues: DNA mismatch repair protein MutL (624 aa).

Basic and acidic residues predominate over residues 340–355 (NKLDTDSHSQSHERGH). Residues 340–415 (NKLDTDSHSQ…RGGATSSYRQ (76 aa)) are disordered. Composition is skewed to polar residues over residues 372–383 (HQTAPSTKASTE) and 391–415 (SPIS…SYRQ).

This sequence belongs to the DNA mismatch repair MutL/HexB family.

In terms of biological role, this protein is involved in the repair of mismatches in DNA. It is required for dam-dependent methyl-directed DNA mismatch repair. May act as a 'molecular matchmaker', a protein that promotes the formation of a stable complex between two or more DNA-binding proteins in an ATP-dependent manner without itself being part of a final effector complex. The polypeptide is DNA mismatch repair protein MutL (Shewanella sediminis (strain HAW-EB3)).